The sequence spans 346 residues: Dihydroorotate dehydrogenase (quinone) (346 aa).

Residues 61 to 65 and T85 contribute to the FMN site; that span reads AGLDK. Residue K65 coordinates substrate. 110–114 is a substrate binding site; it reads NRMGF. Residues N138 and N171 each coordinate FMN. Residue N171 coordinates substrate. The active-site Nucleophile is S174. N176 lines the substrate pocket. The FMN site is built by K216 and T244. Residue 245–246 participates in substrate binding; the sequence is NT. FMN contacts are provided by residues G267, G296, and 317-318; that span reads YS.

The protein belongs to the dihydroorotate dehydrogenase family. Type 2 subfamily. In terms of assembly, monomer. FMN serves as cofactor.

Its subcellular location is the cell membrane. It catalyses the reaction (S)-dihydroorotate + a quinone = orotate + a quinol. Its pathway is pyrimidine metabolism; UMP biosynthesis via de novo pathway; orotate from (S)-dihydroorotate (quinone route): step 1/1. In terms of biological role, catalyzes the conversion of dihydroorotate to orotate with quinone as electron acceptor. In Marinomonas sp. (strain MWYL1), this protein is Dihydroorotate dehydrogenase (quinone).